A 129-amino-acid polypeptide reads, in one-letter code: Small ribosomal subunit protein uS8 (129 aa).

It belongs to the universal ribosomal protein uS8 family. As to quaternary structure, part of the 30S ribosomal subunit. Contacts proteins S5 and S12.

One of the primary rRNA binding proteins, it binds directly to 16S rRNA central domain where it helps coordinate assembly of the platform of the 30S subunit. This chain is Small ribosomal subunit protein uS8, found in Mycoplasma mycoides subsp. mycoides SC (strain CCUG 32753 / NCTC 10114 / PG1).